The primary structure comprises 227 residues: 7-cyano-7-deazaguanine synthase (227 aa).

ATP is bound at residue 10 to 20 (LSGGLDSCVAT). Residues C193, C201, C204, and C207 each contribute to the Zn(2+) site.

The protein belongs to the QueC family. It depends on Zn(2+) as a cofactor.

It carries out the reaction 7-carboxy-7-deazaguanine + NH4(+) + ATP = 7-cyano-7-deazaguanine + ADP + phosphate + H2O + H(+). It participates in purine metabolism; 7-cyano-7-deazaguanine biosynthesis. Its function is as follows. Catalyzes the ATP-dependent conversion of 7-carboxy-7-deazaguanine (CDG) to 7-cyano-7-deazaguanine (preQ(0)). The polypeptide is 7-cyano-7-deazaguanine synthase (Methanobrevibacter smithii (strain ATCC 35061 / DSM 861 / OCM 144 / PS)).